The following is a 113-amino-acid chain: Hydrogenase maturation factor HypA (113 aa).

H2 is a Ni(2+) binding site. Zn(2+) contacts are provided by C73, C76, C89, and C92.

The protein belongs to the HypA/HybF family.

Involved in the maturation of [NiFe] hydrogenases. Required for nickel insertion into the metal center of the hydrogenase. The sequence is that of Hydrogenase maturation factor HypA from Dechloromonas aromatica (strain RCB).